The primary structure comprises 115 residues: Large ribosomal subunit protein bL19 (115 aa).

The protein belongs to the bacterial ribosomal protein bL19 family.

Its function is as follows. This protein is located at the 30S-50S ribosomal subunit interface and may play a role in the structure and function of the aminoacyl-tRNA binding site. This Buchnera aphidicola subsp. Schizaphis graminum (strain Sg) protein is Large ribosomal subunit protein bL19.